We begin with the raw amino-acid sequence, 532 residues long: CTP synthase (532 aa).

The tract at residues 1 to 267 is amidoligase domain; it reads MAKFIFVTGG…QDIIIEQLQL (267 aa). Ser13 contributes to the CTP binding site. Ser13 provides a ligand contact to UTP. 14-19 contacts ATP; it reads GLGKGI. Tyr54 lines the L-glutamine pocket. Residue Asp71 participates in ATP binding. Positions 71 and 141 each coordinate Mg(2+). CTP is bound by residues 148–150, 188–193, and Lys224; these read DIE and KTKPIQ. Residues 188–193 and Lys224 each bind UTP; that span reads KTKPIQ. In terms of domain architecture, Glutamine amidotransferase type-1 spans 292–532; sequence EISFVGKYIE…FIKAIIENNK (241 aa). Gly354 contributes to the L-glutamine binding site. Cys381 functions as the Nucleophile; for glutamine hydrolysis in the catalytic mechanism. L-glutamine-binding positions include 382 to 385, Glu405, and Arg461; that span reads LGMQ. Active-site residues include His506 and Glu508.

The protein belongs to the CTP synthase family. As to quaternary structure, homotetramer.

It catalyses the reaction UTP + L-glutamine + ATP + H2O = CTP + L-glutamate + ADP + phosphate + 2 H(+). The catalysed reaction is L-glutamine + H2O = L-glutamate + NH4(+). The enzyme catalyses UTP + NH4(+) + ATP = CTP + ADP + phosphate + 2 H(+). The protein operates within pyrimidine metabolism; CTP biosynthesis via de novo pathway; CTP from UDP: step 2/2. With respect to regulation, allosterically activated by GTP, when glutamine is the substrate; GTP has no effect on the reaction when ammonia is the substrate. The allosteric effector GTP functions by stabilizing the protein conformation that binds the tetrahedral intermediate(s) formed during glutamine hydrolysis. Inhibited by the product CTP, via allosteric rather than competitive inhibition. Its function is as follows. Catalyzes the ATP-dependent amination of UTP to CTP with either L-glutamine or ammonia as the source of nitrogen. Regulates intracellular CTP levels through interactions with the four ribonucleotide triphosphates. This Mycoplasma capricolum subsp. capricolum (strain California kid / ATCC 27343 / NCTC 10154) protein is CTP synthase.